A 426-amino-acid polypeptide reads, in one-letter code: D-tagatose-1,6-bisphosphate aldolase subunit KbaZ (426 aa).

The protein belongs to the GatZ/KbaZ family. KbaZ subfamily. Forms a complex with KbaY.

The protein operates within carbohydrate metabolism; D-tagatose 6-phosphate degradation; D-glyceraldehyde 3-phosphate and glycerone phosphate from D-tagatose 6-phosphate: step 2/2. In terms of biological role, component of the tagatose-1,6-bisphosphate aldolase KbaYZ that is required for full activity and stability of the Y subunit. Could have a chaperone-like function for the proper and stable folding of KbaY. When expressed alone, KbaZ does not show any aldolase activity. The polypeptide is D-tagatose-1,6-bisphosphate aldolase subunit KbaZ (Escherichia coli O7:K1 (strain IAI39 / ExPEC)).